A 184-amino-acid polypeptide reads, in one-letter code: Phosphonoformate cytidylyltransferase (184 aa).

It carries out the reaction phosphonoformate + CTP = CMP-5'-phosphonoformate + diphosphate. Its pathway is secondary metabolite biosynthesis; bialaphos biosynthesis. Catalyzes the displacement of the beta- and gamma-phosphates of CTP by phosphonoformate to produce CMP-5'-phosphonoformate, an intermediate in the biosynthesis of phosphinothricin tripeptide (PTT), also known as bialaphos (BA), a natural-product antibiotic and potent herbicide. The polypeptide is Phosphonoformate cytidylyltransferase (Streptomyces viridochromogenes (strain DSM 40736 / JCM 4977 / BCRC 1201 / Tue 494)).